A 470-amino-acid chain; its full sequence is tRNA-2-methylthio-N(6)-dimethylallyladenosine synthase (470 aa).

One can recognise an MTTase N-terminal domain in the interval 5 to 122 (RKLYVKSFGC…LPELLAEAKA (118 aa)). [4Fe-4S] cluster is bound by residues Cys14, Cys50, Cys85, Cys163, Cys167, and Cys170. Positions 149–383 (RSRGPAAFVT…LLEASKAAFD (235 aa)) constitute a Radical SAM core domain. In terms of domain architecture, TRAM spans 384 to 446 (ESCRGRTFDI…PNSLAGVPAE (63 aa)). Positions 439-470 (SLAGVPAEASEPSVSQSPVSSARSRPLAAMEA) are disordered. Low complexity predominate over residues 444-464 (PAEASEPSVSQSPVSSARSRP).

It belongs to the methylthiotransferase family. MiaB subfamily. In terms of assembly, monomer. It depends on [4Fe-4S] cluster as a cofactor.

It is found in the cytoplasm. The enzyme catalyses N(6)-dimethylallyladenosine(37) in tRNA + (sulfur carrier)-SH + AH2 + 2 S-adenosyl-L-methionine = 2-methylsulfanyl-N(6)-dimethylallyladenosine(37) in tRNA + (sulfur carrier)-H + 5'-deoxyadenosine + L-methionine + A + S-adenosyl-L-homocysteine + 2 H(+). Its function is as follows. Catalyzes the methylthiolation of N6-(dimethylallyl)adenosine (i(6)A), leading to the formation of 2-methylthio-N6-(dimethylallyl)adenosine (ms(2)i(6)A) at position 37 in tRNAs that read codons beginning with uridine. This is tRNA-2-methylthio-N(6)-dimethylallyladenosine synthase from Xanthobacter autotrophicus (strain ATCC BAA-1158 / Py2).